The primary structure comprises 264 residues: NADH dehydrogenase [ubiquinone] iron-sulfur protein 3, mitochondrial (264 aa).

A mitochondrion-targeting transit peptide spans 1–36; that stretch reads MAAAAVARLWWRGILGASALTRGTGRPSVLLLPVRR.

It belongs to the complex I 30 kDa subunit family. In terms of assembly, core subunit of respiratory chain NADH dehydrogenase (Complex I) which is composed of 45 different subunits. Interacts with NDUFAF3. Interacts with RAB5IF. Found in subcomplexes containing subunits NDUFS2, MT-ND1 and NDUFA13.

It localises to the mitochondrion inner membrane. It catalyses the reaction a ubiquinone + NADH + 5 H(+)(in) = a ubiquinol + NAD(+) + 4 H(+)(out). Functionally, core subunit of the mitochondrial membrane respiratory chain NADH dehydrogenase (Complex I) which catalyzes electron transfer from NADH through the respiratory chain, using ubiquinone as an electron acceptor. Essential for the catalytic activity and assembly of complex I. This chain is NADH dehydrogenase [ubiquinone] iron-sulfur protein 3, mitochondrial (NDUFS3), found in Homo sapiens (Human).